The chain runs to 660 residues: Secretin PulD (660 aa).

The N-terminal stretch at 1 to 27 (MIIANVIRSFSLTLLIFAALLFRPAAA) is a signal peptide. Positions 28 to 124 (EEFSASFKGT…VASDAAPGIG (97 aa)) are N0. The segment at 126 to 190 (EVVTRVVPLT…TIVERVDNAG (65 aa)) is N1. The N2 stretch occupies residues 191 to 264 (DRSVVTVPLS…MIKQLDRQQA (74 aa)). Positions 267-341 (GNTKVIYLKY…DLERVIAQLD (75 aa)) are N3. Residues 346-596 (QVLVEAIIAE…LFIRPTVIRD (251 aa)) form a secretin region. The tract at residues 598 to 660 (DEYRQASSGQ…IDAFNLGGNL (63 aa)) is s domain.

Belongs to the bacterial secretin family. GSP D subfamily. As to quaternary structure, forms a cylindrical channel with 15 subunits.

Its subcellular location is the cell outer membrane. Functionally, involved in a type II secretion system (T2SS, formerly general secretion pathway, GSP) for the export of proteins. Required for the translocation of pullulanase. This subunit forms the outer membrane channel. The polypeptide is Secretin PulD (pulD) (Klebsiella pneumoniae).